The sequence spans 306 residues: Probable L,D-transpeptidase YbiS (306 aa).

A signal peptide spans 1–24 (MNMKLKTLFAAAFAVVGFCSTASA). Positions 99–234 (EGIVINSAEM…VPVGTRVQFI (136 aa)) constitute a L,D-TPase catalytic domain. The active-site Proton donor/acceptor is His194. Cys210 functions as the Nucleophile in the catalytic mechanism.

This sequence belongs to the YkuD family.

The protein localises to the periplasm. It functions in the pathway cell wall biogenesis; peptidoglycan biosynthesis. In terms of biological role, responsible, at least in part, for anchoring of the major outer membrane lipoprotein (Lpp) to the peptidoglycan via a meso-diaminopimelyl-L-Lys- bond on the terminal residue of Lpp. The sequence is that of Probable L,D-transpeptidase YbiS (ybiS) from Escherichia coli O6:H1 (strain CFT073 / ATCC 700928 / UPEC).